Here is a 223-residue protein sequence, read N- to C-terminus: uncharacterized protein (223 aa).

Residues 1–12 constitute a mitochondrion transit peptide; the sequence is MFRSLVRKTTPL.

Its subcellular location is the mitochondrion. This is an uncharacterized protein from Candida albicans (strain WO-1) (Yeast).